We begin with the raw amino-acid sequence, 174 residues long: Guided entry of tail-anchored proteins factor 1 (174 aa).

Residues 1-8 (MSASETDR) are Lumenal-facing. The helical transmembrane segment at 9–29 (WAWLLVLSFVFGCNLLRILLP) threads the bilayer. The Cytoplasmic portion of the chain corresponds to 30–99 (SLSSFISRVL…VKARTAQLAK (70 aa)). Residues 39–94 (LQKDAEQESQMRAEIQGMKQELSTVNMMDEFARYARLERKINKMTDKLKTHVKART) are a coiled coil. The tract at residues 39 to 97 (LQKDAEQESQMRAEIQGMKQELSTVNMMDEFARYARLERKINKMTDKLKTHVKARTAQL) is interaction with GET3/TRC40. Residues 100–120 (IKWFISVAFYILQAALMISLI) traverse the membrane as a helical segment. The Lumenal portion of the chain corresponds to 121 to 148 (WKYYSVPVAVVPSKWITPLDRLVAFPTR). The chain crosses the membrane as a helical span at residues 149-169 (VAGGIGITCWILVCNKVVAIV). At 170–174 (LHPFS) the chain is on the cytoplasmic side.

The protein belongs to the WRB/GET1 family. Component of the Golgi to ER traffic (GET) complex, which is composed of GET1, CAMLG/GET2 and GET3. Within the complex, GET1 and CAMLG form a heterotetramer which is stabilized by phosphatidylinositol binding and which binds to the GET3 homodimer. Interacts with CAMLG/GET2 (via C-terminus). GET3 shows a higher affinity for CAMLG than for GET1.

The protein localises to the endoplasmic reticulum membrane. Required for the post-translational delivery of tail-anchored (TA) proteins to the endoplasmic reticulum. Together with CAMLG/GET2, acts as a membrane receptor for soluble GET3/TRC40, which recognizes and selectively binds the transmembrane domain of TA proteins in the cytosol. Required to ensure correct topology and ER insertion of CAMLG. The chain is Guided entry of tail-anchored proteins factor 1 from Mus musculus (Mouse).